The following is a 91-amino-acid chain: MSRTIFCTFLQREAEGQDFQLYPGELGKRIYNEISKEAWAQWQHKQTMLINEKKLNMMNAEHRKLLEQEMVNFLFEGKEVHIEGFTPEDKK.

It belongs to the Fe(2+)-trafficking protein family. Monomer.

Functionally, could be a mediator in iron transactions between iron acquisition and iron-requiring processes, such as synthesis and/or repair of Fe-S clusters in biosynthetic enzymes. This Escherichia coli O6:H1 (strain CFT073 / ATCC 700928 / UPEC) protein is Probable Fe(2+)-trafficking protein.